The primary structure comprises 77 residues: MARVCEVTGKKPMVGNNVSHANNKTKRRFLPNLQYRRFWVESENRWVRLRVSSAALRLIDKNGIDSVLADMRARGQA.

The protein belongs to the bacterial ribosomal protein bL28 family.

The protein is Large ribosomal subunit protein bL28 of Acidovorax ebreus (strain TPSY) (Diaphorobacter sp. (strain TPSY)).